The following is a 328-amino-acid chain: Sin3 histone deacetylase corepressor complex component SDS3 (328 aa).

Positions 1–22 are enriched in low complexity; that stretch reads MSAAGLLAPAPAPAAAPAAPEY. Residues 1–69 form a disordered region; it reads MSAAGLLAPA…HDEEDYVEMK (69 aa). At serine 2 the chain carries N-acetylserine. The tract at residues 2–170 is mediates interaction with USP17L2; it reads SAAGLLAPAP…IENEKLTMEL (169 aa). Composition is skewed to acidic residues over residues 23–37 and 45–54; these read YPED…EDDE and SDEDTEDASE. A phosphoserine mark is found at serine 32 and serine 45. A Phosphothreonine modification is found at threonine 49. At serine 53 the chain carries Phosphoserine. The span at 56–69 shows a compositional bias: basic and acidic residues; it reads DLAKHDEEDYVEMK. The stretch at 66-171 forms a coiled coil; that stretch reads VEMKEQMYQD…ENEKLTMELT (106 aa). Glycyl lysine isopeptide (Lys-Gly) (interchain with G-Cter in SUMO2) cross-links involve residues lysine 69, lysine 178, and lysine 201. A sin3 interaction domain (SID) region spans residues 188-226; sequence RPNDPVPIPDKRRKPAPAQLNYLLTDEQIMEDLRTLNKL. The disordered stretch occupies residues 226 to 252; sequence LKSPKRPASPSSPEHLPATPAESPAQR. Phosphoserine is present on residues serine 228, serine 234, and serine 237. Position 244 is a phosphothreonine (threonine 244).

The protein belongs to the SDS3 family. As to quaternary structure, interacts with HCFC1. Homodimer. Component of the SIN3 histone deacetylase (HDAC) corepressor complex. Interacts with SIN3A. Interaction with SIN3B enhances the interaction between SIN3B and HDAC1 to form a complex. Component of a mSin3A corepressor complex that contains SIN3A, SAP130, SUDS3/SAP45, ARID4B/SAP180, HDAC1 and HDAC2. Interacts with USP17L2; the interaction is direct. Interacts with FOXK2. Polyubiquitinated. 'Lys-63'-polyubiquitinated SUDS3 positively regulates histone deacetylation. Regulated through deubiquitination by USP17L2/USP17 that cleaves 'Lys-63'-linked ubiquitin chains. As to expression, expressed in all newborn tissues tested, including brain, kidney and liver.

It localises to the nucleus. Its function is as follows. Regulatory protein which represses transcription and augments histone deacetylase activity of HDAC1. May have a potential role in tumor suppressor pathways through regulation of apoptosis. May function in the assembly and/or enzymatic activity of the mSin3A corepressor complex or in mediating interactions between the complex and other regulatory complexes. The polypeptide is Sin3 histone deacetylase corepressor complex component SDS3 (Suds3) (Mus musculus (Mouse)).